Here is a 209-residue protein sequence, read N- to C-terminus: Probable glutathione peroxidase 8-A (209 aa).

Residues 18–40 (VSVVFLSMLLCTGILCVLQLGFL) traverse the membrane as a helical segment. Residue Cys79 is part of the active site.

It belongs to the glutathione peroxidase family.

The protein resides in the membrane. The enzyme catalyses 2 glutathione + H2O2 = glutathione disulfide + 2 H2O. The chain is Probable glutathione peroxidase 8-A (gpx8-a) from Xenopus laevis (African clawed frog).